A 480-amino-acid chain; its full sequence is Major facilitator superfamily domain-containing protein 12 (480 aa).

Position 1 is an N-acetylmethionine (M1). The Cytoplasmic portion of the chain corresponds to 1–26 (MGPGPPAAGAAPSPRPLSLVARLSYA). The chain crosses the membrane as a helical span at residues 27–47 (VGHFLNDLCASMWFTYLLLYL). At 48-56 (HSVRAYSSR) the chain is on the lumenal side. Residues 57-77 (GAGLLLLLGQVADGLCTPLVG) traverse the membrane as a helical segment. Topologically, residues 78-97 (YEADRAASCCARYGPRKAWH) are cytoplasmic. Residues 98-118 (LVGTVCVLLSFPFIFSPCLGC) traverse the membrane as a helical segment. The Lumenal segment spans residues 119–124 (GAATPE). The helical transmembrane segment at 125–145 (WAALLYYGPFIVIFQFGWAST) threads the bilayer. The Cytoplasmic portion of the chain corresponds to 146–170 (QISHLSLIPELVTNDHEKVELTALR). A helical membrane pass occupies residues 171 to 191 (YAFTVVANITVYGAAWLLLHL). The Lumenal portion of the chain corresponds to 192–218 (QGSSRVEPTQDISISDQLGGQDVPVFR). A helical transmembrane segment spans residues 219–239 (NLSLLVVGVGAVFSLLFHLGT). The Cytoplasmic segment spans residues 240–279 (RERRRPHAEEPGEHTPLLAPATAQPLLLWKHWLREPAFYQ). Residue T254 is modified to Phosphothreonine; by MTOR. Residues 280–302 (VGILYMTTRLIVNLSQTYMAMYL) traverse the membrane as a helical segment. Over 303–310 (TYSLHLPK) the chain is Lumenal. The chain crosses the membrane as a helical span at residues 311–331 (KFIATIPLVMYLSGFLSSFLM). Residues 332 to 347 (KPINKCIGRNMTYFSG) are Cytoplasmic-facing. The next 2 membrane-spanning stretches (helical) occupy residues 348 to 368 (LLVILAFAAWVALAEGLGVAV) and 369 to 389 (YAAAVLLGAGCATILVTSLAM). The Cytoplasmic portion of the chain corresponds to 390 to 402 (TADLIGPHTNSGA). Residues 403-423 (FVYGSMSFLDKVANGLAVMAI) traverse the membrane as a helical segment. Residues 424–446 (QSLHPCPSELCCRACVSFYHWAM) are Lumenal-facing. The chain crosses the membrane as a helical span at residues 447–467 (VAVTGGVGVAAALCLCSLLLW). Over 468 to 480 (PTRLRRWDRDARP) the chain is Cytoplasmic.

The protein belongs to the major facilitator superfamily. Phosphorylation at Thr-254 by MTOR via mTORC1 pathway promotes cysteine transport in lysosomes, thereby regulating lysosomal cysteine and cystine storage and redox homeostasis. In terms of tissue distribution, widely expressed, with high expression in primary melanocytes.

It is found in the melanosome membrane. The protein localises to the lysosome membrane. It carries out the reaction L-cysteine(in) = L-cysteine(out). Functionally, transporter that mediates the import of cysteine into melanosomes, thereby regulating skin pigmentation. In melanosomes, cysteine import is required both for normal levels of cystine, the oxidized dimer of cysteine, and provide cysteine for the production of the cysteinyldopas used in pheomelanin synthesis, thereby regulating skin pigmentation. Also catalyzes import of cysteine into lysosomes in non-pigmented cells, regulating lysosomal cystine and cysteine storage, which is essnetial for redox homeostasis. In Homo sapiens (Human), this protein is Major facilitator superfamily domain-containing protein 12.